The sequence spans 556 residues: 2-methylpropanoate--CoA ligase CCL4 (556 aa).

ATP contacts are provided by residues 192-200, 325-330, D423, 435-438, and K531; these read TSGTTSSPK, HGYGLT, and IKDR. Positions 260-325 are SBD1; that stretch reads DSEIIYDMIK…TESLGFAVSH (66 aa). The segment at 326–402 is SBD2; sequence GYGLTETAGL…LRGGSVMLGY (77 aa).

The protein belongs to the ATP-dependent AMP-binding enzyme family. In terms of tissue distribution, mostly expressed in old leaves and in cones and glandular trichomes (lupulin glands) after flowering, and, to a lower extent, in stems, young leaves and flowers.

It is found in the cytoplasm. Its subcellular location is the cytosol. The enzyme catalyses 2-methylpropanoate + ATP + CoA = 2-methylpropanoyl-CoA + AMP + diphosphate. It carries out the reaction propanoate + ATP + CoA = propanoyl-CoA + AMP + diphosphate. It catalyses the reaction butanoate + ATP + CoA = butanoyl-CoA + AMP + diphosphate. The catalysed reaction is 2-methylbutanoate + ATP + CoA = 2-methylbutanoyl-CoA + AMP + diphosphate. The protein operates within secondary metabolite biosynthesis. In terms of biological role, involved in the biosynthesis of prenylated phenolics natural products which contribute to the bitter taste of beer and display broad biological activities. Catalyzes the ligation of CoA on 2-methylpropanoate (isobutyric acid) and 2-methylbutanoate to produce 2-methylpropanoyl-CoA and 2-methylbutanoyl-CoA, respectively. Can also use propanoate and butanoate as substrates with a lower efficiency. The protein is 2-methylpropanoate--CoA ligase CCL4 of Humulus lupulus (European hop).